The primary structure comprises 208 residues: Guanylate kinase (208 aa).

Residues 4 to 185 (GNLYILSAPS…ALADFQAILR (182 aa)) enclose the Guanylate kinase-like domain. Position 11–18 (11–18 (APSGAGKS)) interacts with ATP.

Belongs to the guanylate kinase family.

The protein resides in the cytoplasm. It catalyses the reaction GMP + ATP = GDP + ADP. Essential for recycling GMP and indirectly, cGMP. The sequence is that of Guanylate kinase (gmk) from Pasteurella multocida (strain Pm70).